We begin with the raw amino-acid sequence, 204 residues long: MGNKCSRSKVKEPKRKDIDELAERENLKKQSEEIIEEKPEEVVEQVEETHEEPLEQEQELDEQKIEEEEEEPEQVPKEEIDYATQENKSFEEKHLEDLERSNSDIYSESQKFDNASDKLETGTQLTLSTEATGAVQQITKLSEPAHEESIYFTYRSVTPCDMNKLDETAKVFSRRCGCDLGERHDENACKICRKIDLSDTPLLS.

A disordered region spans residues 1–86 (MGNKCSRSKV…KEEIDYATQE (86 aa)). G2 carries N-myristoyl glycine lipidation. The interval 2–29 (GNKCSRSKVKEPKRKDIDELAERENLKK) is targets GAP45 to the cell membrane; however, dispensable for the formation of the glideosome complex and the association with the inner membrane complex. Over residues 9–53 (KVKEPKRKDIDELAERENLKKQSEEIIEEKPEEVVEQVEETHEEP) the composition is skewed to basic and acidic residues. Over residues 54 to 73 (LEQEQELDEQKIEEEEEEPE) the composition is skewed to acidic residues. Position 89 is a phosphoserine; by CPK10 (S89). S103 carries the phosphoserine; by CPK10 and PKB modification. At S149 the chain carries Phosphoserine; by CPK10.

Component of the glideosome complex composed of GAP50, GAP45, MTIP and MyoA; the complex is formed during the late schizont stage and in merozoites. MyoA, MTIP and GAP45 probably form an initial complex in the cytoplasm which is then recruited to the outer face of the inner membrane complex via the interaction with GAP50. Interacts with GAP50; the interaction is independent of GAP45 phosphorylation status and can also occur independently of the formation of the glideosome complex. Phosphorylated at multiple sites. Phosphorylation increases during the schizont stage and peaks in segmented merozoites. May be phosphorylated by PKB. In schizonts, phosphorylated at Ser-89 and Ser-149 in response to phospholipase C-mediated calcium release. Phosphorylation at Ser-149 begins in early schizonts while phosphorylation at Ser-103 begins in late schizonts. Phosphorylation at Ser-89, Ser-103 and Ser-149 appears to be dispensable for GAP45 inner membrane complex localization or GAP45 inclusion in the glideosome complex. Phosphorylation is not required for interaction with GAP50; however, it may regulate the interaction with MTIP and MyoA. Post-translationally, N-myristoylated by NMT. N-myristoylation may contribute to the targeting of GAP45 to the inner membrane complex with the subsequent palmitoylation strengthening the interaction with the membrane. In terms of processing, palmitoylated. Palmitoylation appears to follow N-myristoylation and may strengthen the interaction with the inner membrane complex.

It is found in the inner membrane complex. Functionally, component of the glideosome complex, an inner membrane complex structure involved in parasite gliding motility and host cell invasion. During the asexual blood stage, required in schizonts to recruit MTIP and MyoA to the inner membrane complex where they assemble with GAP50 to form the glideosome complex. By regulating the formation of the glideosome, plays an essential role during merozoite invasion of host erythrocytes. This Plasmodium falciparum (isolate 3D7) protein is Glideosome-associated protein 45.